The primary structure comprises 306 residues: D-alanine--D-alanine ligase (306 aa).

One can recognise an ATP-grasp domain in the interval 101 to 303; sequence KLVWQALGLP…FSQLVARILM (203 aa). 134–189 lines the ATP pocket; sequence VAKLGLPLIVKPSHEGSSVGMSKVDHASELQKALVEAFQHDSDVLIEKWLSGPEFT. Mg(2+)-binding residues include Asp257, Glu270, and Asn272.

The protein belongs to the D-alanine--D-alanine ligase family. Mg(2+) serves as cofactor. The cofactor is Mn(2+).

The protein resides in the cytoplasm. It catalyses the reaction 2 D-alanine + ATP = D-alanyl-D-alanine + ADP + phosphate + H(+). It functions in the pathway cell wall biogenesis; peptidoglycan biosynthesis. Its function is as follows. Cell wall formation. This chain is D-alanine--D-alanine ligase, found in Yersinia pseudotuberculosis serotype O:1b (strain IP 31758).